A 164-amino-acid chain; its full sequence is MRLTSKGRYAVTAMLDVALHSQEGPVPLADISERQGISLSYLEQLFSRLRKNGLVASVRGPGGGYLLGKDASEIAVGAVITAVDESVDATRCQGKEGCQGGDRCLTHTLWRDLSERISGFLNNITLAELVNNQDVLVVADRQNNDTRRTANGRPQETINVNLRA.

The 130-residue stretch at 2–131 (RLTSKGRYAV…NNITLAELVN (130 aa)) folds into the HTH rrf2-type domain. The segment at residues 28–51 (LADISERQGISLSYLEQLFSRLRK) is a DNA-binding region (H-T-H motif). [2Fe-2S] cluster contacts are provided by Cys-92, Cys-98, and Cys-104. 3 residues coordinate a metal cation: Cys-92, Cys-98, and Cys-104. A disordered region spans residues 145-164 (DTRRTANGRPQETINVNLRA). Positions 152–164 (GRPQETINVNLRA) are enriched in polar residues.

The cofactor is [2Fe-2S] cluster.

Its function is as follows. Regulates the transcription of several operons and genes involved in the biogenesis of Fe-S clusters and Fe-S-containing proteins. This chain is HTH-type transcriptional regulator IscR, found in Serratia proteamaculans (strain 568).